Consider the following 346-residue polypeptide: NADH-ubiquinone oxidoreductase chain 2 (346 aa).

Helical transmembrane passes span 1–21, 26–46, 60–80, 96–116, 122–142, 151–171, 178–198, 199–219, 242–262, 274–294, and 320–340; these read MSPY…MLIS, WVFM…ILVW, FIVQ…SLSG, MMIM…YWVV, LNYI…LAVL, SSML…GGLG, LLAF…VAGS, LLGL…FSIL, VLLG…GFFG, LLLG…FYYL, and LSGL…LVGG.

Belongs to the complex I subunit 2 family.

Its subcellular location is the mitochondrion inner membrane. It carries out the reaction a ubiquinone + NADH + 5 H(+)(in) = a ubiquinol + NAD(+) + 4 H(+)(out). In terms of biological role, core subunit of the mitochondrial membrane respiratory chain NADH dehydrogenase (Complex I) that is believed to belong to the minimal assembly required for catalysis. Complex I functions in the transfer of electrons from NADH to the respiratory chain. The immediate electron acceptor for the enzyme is believed to be ubiquinone. The polypeptide is NADH-ubiquinone oxidoreductase chain 2 (ND2) (Branchiostoma floridae (Florida lancelet)).